The following is a 302-amino-acid chain: GTP cyclohydrolase FolE2 (302 aa).

The protein belongs to the GTP cyclohydrolase IV family.

It catalyses the reaction GTP + H2O = 7,8-dihydroneopterin 3'-triphosphate + formate + H(+). It functions in the pathway cofactor biosynthesis; 7,8-dihydroneopterin triphosphate biosynthesis; 7,8-dihydroneopterin triphosphate from GTP: step 1/1. In terms of biological role, converts GTP to 7,8-dihydroneopterin triphosphate. This chain is GTP cyclohydrolase FolE2, found in Pseudoalteromonas translucida (strain TAC 125).